We begin with the raw amino-acid sequence, 387 residues long: MSRVGILLLNLGGPEQLEDVRPFLFNLFSDPEIIRLPFPWLQKPLAWFISTMRFQKSQENYKEIGGGSPLRSITEEQALAIQQQLEQKGLLTQMYIGMRYWHPFTEEALTRIKREQVEKLVILPLYPQYSISTSGSSFRLLDKLWEKDSELKKIEYTVIPSWHQRPGYVQAMVELITQQLDQSPNPDQVHIFFSAHGVPVSYVEEAGDPYQAEIEECVDKIMKTLNCSNPHTLAYQSRVGPVEWLKPYTEDAIEELAAGGVKDLLVVPISFVSEHIETLQEIDIEYRELAEEAGISNFYRVPALNTHPVFINDLADLVMEALDAPSRDFSDAIQMKKIIKMYPQERWQWGLTTTAEVWNGRLAMVGFMALLLELITGYGPLHFAGLL.

Fe cation is bound by residues H196 and E277.

This sequence belongs to the ferrochelatase family.

It localises to the cytoplasm. It carries out the reaction heme b + 2 H(+) = protoporphyrin IX + Fe(2+). It participates in porphyrin-containing compound metabolism; protoheme biosynthesis; protoheme from protoporphyrin-IX: step 1/1. In terms of biological role, catalyzes the ferrous insertion into protoporphyrin IX. The protein is Ferrochelatase of Trichodesmium erythraeum (strain IMS101).